The sequence spans 300 residues: Free fatty acid receptor 1 (300 aa).

Over 1-8 the chain is Extracellular; it reads MDLPPQLS. Residues 9–31 traverse the membrane as a helical segment; that stretch reads FALYVSAFALGFPLNLLAIRGAV. Over 32–41 the chain is Cytoplasmic; it reads SHAKLRLTPS. The chain crosses the membrane as a helical span at residues 42 to 64; the sequence is LVYTLHLGCSDLLLAITLPLKAV. The Extracellular segment spans residues 65–79; sequence EALASGAWPLPLPFC. Cys79 and Cys170 are joined by a disulfide. The chain crosses the membrane as a helical span at residues 80–101; sequence PVFALAHFAPLYAGGGFLAALS. Residues 102–121 are Cytoplasmic-facing; it reads AGRYLGAAFPFGYQAIRRPR. The helical transmembrane segment at 122–142 threads the bilayer; the sequence is YSWGVCVAIWALVLCHLGLAL. Over 143–178 the chain is Extracellular; it reads GLETSGSWLDNSTSSLGINIPVNGSPVCLEAWDPDS. N-linked (GlcNAc...) asparagine glycosylation is present at Asn153. A helical membrane pass occupies residues 179–200; the sequence is ARPARLSFSILLFFLPLVITAF. Topologically, residues 201–223 are cytoplasmic; that stretch reads CYVGCLRALVRSGLSHKRKLRAA. Residues 224–248 form a helical membrane-spanning segment; sequence WVAGGALLTLLLCLGPYNASNVASF. The Extracellular segment spans residues 249-256; it reads INPDLGGS. The helical transmembrane segment at 257 to 279 threads the bilayer; the sequence is WRKLGLITGAWSVVLNPLVTGYL. Residues 280-300 are Cytoplasmic-facing; that stretch reads GTGPGRGTICVTRTQRGTIQK.

Belongs to the G-protein coupled receptor 1 family. As to expression, expressed in pancreatic islet beta cells (at protein level). Expressed in pancreatic islet beta cells.

The protein localises to the cell membrane. With respect to regulation, is also activated by synthetic agonists, such as AM-8182, AM-6331 and TAK-875 (fasiglifam). AM-8182 is a full agonist, while AM-6331 and TAK-875 (fasiglifam) are partial agonists that potentiate the activity of the endogenous ligands, such as alpha-linolenic acid and gamma-linolenic acid. Its function is as follows. G-protein coupled receptor for medium and long chain saturated and unsaturated fatty acids that plays an important role in glucose homeostasis. Fatty acid binding increases glucose-stimulated insulin secretion, and may also enhance the secretion of glucagon-like peptide 1 (GLP-1). May also play a role in bone homeostasis; receptor signaling activates pathways that inhibit osteoclast differentiation. Ligand binding leads to a conformation change that triggers signaling via G-proteins that activate phospholipase C, leading to an increase of the intracellular calcium concentration. Seems to act through a G(q) and G(i)-mediated pathway. Mediates the anti-inflammatory effects of omega-3 polyunsaturated fatty acids (PUFAs) via inhibition of NLRP3 inflammasome activation. The protein is Free fatty acid receptor 1 (Ffar1) of Mus musculus (Mouse).